Here is a 394-residue protein sequence, read N- to C-terminus: NAD(P)H-quinone oxidoreductase subunit H (394 aa).

Belongs to the complex I 49 kDa subunit family. In terms of assembly, NDH-1 can be composed of about 15 different subunits; different subcomplexes with different compositions have been identified which probably have different functions.

The protein localises to the cellular thylakoid membrane. It carries out the reaction a plastoquinone + NADH + (n+1) H(+)(in) = a plastoquinol + NAD(+) + n H(+)(out). The catalysed reaction is a plastoquinone + NADPH + (n+1) H(+)(in) = a plastoquinol + NADP(+) + n H(+)(out). Its function is as follows. NDH-1 shuttles electrons from an unknown electron donor, via FMN and iron-sulfur (Fe-S) centers, to quinones in the respiratory and/or the photosynthetic chain. The immediate electron acceptor for the enzyme in this species is believed to be plastoquinone. Couples the redox reaction to proton translocation, and thus conserves the redox energy in a proton gradient. Cyanobacterial NDH-1 also plays a role in inorganic carbon-concentration. This chain is NAD(P)H-quinone oxidoreductase subunit H, found in Prochlorococcus marinus (strain NATL2A).